Reading from the N-terminus, the 1197-residue chain is uncharacterized protein (1197 aa).

This is an uncharacterized protein from Sinorhizobium fredii (strain NBRC 101917 / NGR234).